A 69-amino-acid chain; its full sequence is MIERILFPTMSGTSRSPPSYLFIRKNVILDIVQIIKSPYMFAIVEIVFHSCSKTMAVTYELRYTLESHL.

This is an uncharacterized protein from Homo sapiens (Human).